Reading from the N-terminus, the 460-residue chain is uncharacterized protein (460 aa).

Positions 6-64 constitute a TRAM domain; it reads PVKKNNDYEIYIDDFGNMGEGIGKIDNFTVFVKDAVKGEKVRAKIIKVNKSFAIGKLID. Cysteine 77, cysteine 83, cysteine 86, and cysteine 166 together coordinate [4Fe-4S] cluster. 4 residues coordinate S-adenosyl-L-methionine: glutamine 290, tyrosine 319, glutamate 340, and aspartate 388. The active-site Nucleophile is cysteine 415.

Belongs to the class I-like SAM-binding methyltransferase superfamily. RNA M5U methyltransferase family.

This is an uncharacterized protein from Clostridium acetobutylicum (strain ATCC 824 / DSM 792 / JCM 1419 / IAM 19013 / LMG 5710 / NBRC 13948 / NRRL B-527 / VKM B-1787 / 2291 / W).